Reading from the N-terminus, the 784-residue chain is E3 UFM1-protein ligase 1 homolog (784 aa).

The interval 401–481 (QKGNSSAQDL…GGGGGGNKKT (81 aa)) is disordered.

Belongs to the UFL1 family.

In terms of biological role, E3 UFM1-protein ligase that mediates ufmylation of target proteins. In Drosophila ananassae (Fruit fly), this protein is E3 UFM1-protein ligase 1 homolog.